We begin with the raw amino-acid sequence, 310 residues long: Protoheme IX farnesyltransferase (310 aa).

Transmembrane regions (helical) follow at residues 37–57 (LITVFAGYVVAASYLTDDVLL), 64–84 (LTLLWTLLGSGLVIAGSCYLN), 113–133 (ILALGLGILATGTVLLLIVNH), 134–154 (VAAVFGLIGSFVYVVIYTMWL), 159–181 (TINTVVGGISGAVPPIIGFAAVT), 186–208 (IDAWILFLIMFVWQPPHFLALAM), 215–237 (RAAGIPMLPVVNGFAITKRQIVW), 257–277 (MLVMAVLGGYWLYMGLKGLKI), and 290–310 (MFFFSLFYFTAWIVTVVLVSL).

This sequence belongs to the UbiA prenyltransferase family. Protoheme IX farnesyltransferase subfamily. As to quaternary structure, interacts with CtaA.

It localises to the cell membrane. The catalysed reaction is heme b + (2E,6E)-farnesyl diphosphate + H2O = Fe(II)-heme o + diphosphate. Its pathway is porphyrin-containing compound metabolism; heme O biosynthesis; heme O from protoheme: step 1/1. Converts heme B (protoheme IX) to heme O by substitution of the vinyl group on carbon 2 of heme B porphyrin ring with a hydroxyethyl farnesyl side group. The sequence is that of Protoheme IX farnesyltransferase from Exiguobacterium sibiricum (strain DSM 17290 / CCUG 55495 / CIP 109462 / JCM 13490 / 255-15).